Reading from the N-terminus, the 72-residue chain is Cytochrome c oxidase subunit 8C, mitochondrial (72 aa).

The N-terminal 29 residues, 1-29 (MSRLLQFCSSLLRHRVVLFSKPGHSGRLS), are a transit peptide targeting the mitochondrion. Over 30-40 (HSESPQNQVLT) the chain is Mitochondrial matrix. A helical transmembrane segment spans residues 41–64 (PTESVVGIVVFFATFFIPAAYVMS). Over 65-72 (NLKFFKGE) the chain is Mitochondrial intermembrane.

It belongs to the cytochrome c oxidase VIII family. In terms of assembly, component of the cytochrome c oxidase (complex IV, CIV), a multisubunit enzyme composed of 14 subunits. The complex is composed of a catalytic core of 3 subunits MT-CO1, MT-CO2 and MT-CO3, encoded in the mitochondrial DNA, and 11 supernumerary subunits COX4I, COX5A, COX5B, COX6A, COX6B, COX6C, COX7A, COX7B, COX7C, COX8 and NDUFA4, which are encoded in the nuclear genome. The complex exists as a monomer or a dimer and forms supercomplexes (SCs) in the inner mitochondrial membrane with NADH-ubiquinone oxidoreductase (complex I, CI) and ubiquinol-cytochrome c oxidoreductase (cytochrome b-c1 complex, complex III, CIII), resulting in different assemblies (supercomplex SCI(1)III(2)IV(1) and megacomplex MCI(2)III(2)IV(2)).

Its subcellular location is the mitochondrion inner membrane. It functions in the pathway energy metabolism; oxidative phosphorylation. In terms of biological role, component of the cytochrome c oxidase, the last enzyme in the mitochondrial electron transport chain which drives oxidative phosphorylation. The respiratory chain contains 3 multisubunit complexes succinate dehydrogenase (complex II, CII), ubiquinol-cytochrome c oxidoreductase (cytochrome b-c1 complex, complex III, CIII) and cytochrome c oxidase (complex IV, CIV), that cooperate to transfer electrons derived from NADH and succinate to molecular oxygen, creating an electrochemical gradient over the inner membrane that drives transmembrane transport and the ATP synthase. Cytochrome c oxidase is the component of the respiratory chain that catalyzes the reduction of oxygen to water. Electrons originating from reduced cytochrome c in the intermembrane space (IMS) are transferred via the dinuclear copper A center (CU(A)) of subunit 2 and heme A of subunit 1 to the active site in subunit 1, a binuclear center (BNC) formed by heme A3 and copper B (CU(B)). The BNC reduces molecular oxygen to 2 water molecules using 4 electrons from cytochrome c in the IMS and 4 protons from the mitochondrial matrix. This Rattus norvegicus (Rat) protein is Cytochrome c oxidase subunit 8C, mitochondrial (Cox8c).